Reading from the N-terminus, the 313-residue chain is Putative S-adenosyl-L-methionine-dependent methyltransferase MAV_5150 (313 aa).

Residues Asp139 and 168–169 (DL) each bind S-adenosyl-L-methionine.

Belongs to the UPF0677 family.

Exhibits S-adenosyl-L-methionine-dependent methyltransferase activity. The protein is Putative S-adenosyl-L-methionine-dependent methyltransferase MAV_5150 of Mycobacterium avium (strain 104).